Reading from the N-terminus, the 61-residue chain is Small ribosomal subunit protein uS14 (61 aa).

Residues Cys-24, Cys-27, Cys-40, and Cys-43 each coordinate Zn(2+).

Belongs to the universal ribosomal protein uS14 family. Zinc-binding uS14 subfamily. In terms of assembly, part of the 30S ribosomal subunit. Contacts proteins S3 and S10. The cofactor is Zn(2+).

Binds 16S rRNA, required for the assembly of 30S particles and may also be responsible for determining the conformation of the 16S rRNA at the A site. The protein is Small ribosomal subunit protein uS14 of Dictyoglomus thermophilum (strain ATCC 35947 / DSM 3960 / H-6-12).